A 481-amino-acid polypeptide reads, in one-letter code: uncharacterized protein (481 aa).

A run of 13 helical transmembrane segments spans residues 3 to 23, 33 to 53, 75 to 95, 99 to 119, 122 to 142, 155 to 175, 196 to 216, 241 to 261, 264 to 284, 303 to 323, 351 to 371, 400 to 420, and 443 to 463; these read YLPM…LLHG, FITA…YYYF, QAII…GMGE, NNMF…IVLA, IFNL…LVFL, YMIM…FLLA, IYGG…LPPF, FVLV…DYFA, HAVL…MALL, VATG…FHAI, GGLL…KLAI, IIMI…FYLI, and VFSL…PDIV.

It localises to the cell membrane. This is an uncharacterized protein from Methanocaldococcus jannaschii (strain ATCC 43067 / DSM 2661 / JAL-1 / JCM 10045 / NBRC 100440) (Methanococcus jannaschii).